A 941-amino-acid chain; its full sequence is Glycine dehydrogenase (decarboxylating) (941 aa).

Residue K692 is modified to N6-(pyridoxal phosphate)lysine.

This sequence belongs to the GcvP family. The glycine cleavage system is composed of four proteins: P, T, L and H. Pyridoxal 5'-phosphate serves as cofactor.

It catalyses the reaction N(6)-[(R)-lipoyl]-L-lysyl-[glycine-cleavage complex H protein] + glycine + H(+) = N(6)-[(R)-S(8)-aminomethyldihydrolipoyl]-L-lysyl-[glycine-cleavage complex H protein] + CO2. The glycine cleavage system catalyzes the degradation of glycine. The P protein binds the alpha-amino group of glycine through its pyridoxal phosphate cofactor; CO(2) is released and the remaining methylamine moiety is then transferred to the lipoamide cofactor of the H protein. The polypeptide is Glycine dehydrogenase (decarboxylating) (Mycolicibacterium paratuberculosis (strain ATCC BAA-968 / K-10) (Mycobacterium paratuberculosis)).